A 232-amino-acid chain; its full sequence is Probable phospholipid hydroperoxide glutathione peroxidase 6, mitochondrial (232 aa).

The N-terminal 54 residues, 1-54 (MLRSSIRLLYIRRTSPLLRSLSSSSSSSSSKRFDSAKPLFNSHRIISLPISTTG), are a transit peptide targeting the mitochondrion. C105 is a catalytic residue.

This sequence belongs to the glutathione peroxidase family. In terms of tissue distribution, expressed at a low but detectable level in leaves, stems, and flowers, but at a higher level in siliques and even higher in roots. Predominantly expressed in seeds.

It is found in the mitochondrion. It catalyses the reaction a hydroperoxy polyunsaturated fatty acid + 2 glutathione = a hydroxy polyunsaturated fatty acid + glutathione disulfide + H2O. Functionally, protects cells and enzymes from oxidative damage, by catalyzing the reduction of hydrogen peroxide, lipid peroxides and organic hydroperoxide, by glutathione. This is Probable phospholipid hydroperoxide glutathione peroxidase 6, mitochondrial (GPX6) from Arabidopsis thaliana (Mouse-ear cress).